The following is a 441-amino-acid chain: MFSDERTVGVAVLGLGNVGSEVVRIIEGSADDLAARIGAPLMLRGIGVRRVAVDRGVPVDLLTDNIEELVSRADVDIVVEVMGPVELSRKAILSALEHGKSVVTANKALLAASTGELAQAAESAHVDLYFEAAVAGAIPVIRPLTQSLAGDTVLRVAGIVNGTTNYILSAMDSTGADYDSALAGARALGYAEADPTADVEGHDAAAKAAILASIAFHTRVTADDVYREGITKITPADFVSARALGCTIKLLFICERITAADGQQRVSARVYPALVPMSHPLATVSGAFNAVVVEAEAAGRLMFYGQGAGGAPTASAVTGDLVMAARNRVLGSRGPKESKYAQLPMETIGFISTRYYVSMNVADKPGVLSGVAAEFAKREVSIAEVRQEGVVDDGGRRVGARIVVVTHGATDAALSETVDALADLDVVQGVTSVLRLEGISL.

Asn-17 and Val-18 together coordinate NADP(+). NAD(+) contacts are provided by Val-18 and Gly-47. Residue Val-18 participates in NADPH binding. The NADP(+) site is built by Arg-49, Arg-50, and Lys-107. Arg-49 serves as a coordination point for NADPH. Residue Lys-107 participates in NADPH binding. Na(+) contacts are provided by Glu-131, Val-134, Gly-136, and Ile-138. NADP(+) is bound by residues Gly-189 and Glu-192. Residues Glu-192 and Asp-203 each contribute to the L-homoserine site. Catalysis depends on Lys-207, which acts as the Proton donor. Gly-309 contacts NADP(+). Gly-309 lines the NAD(+) pocket. Position 309 (Gly-309) interacts with NADPH. The 80-residue stretch at Tyr-356–Arg-435 folds into the ACT domain.

This sequence belongs to the homoserine dehydrogenase family. Requires a metal cation as cofactor.

It catalyses the reaction L-homoserine + NADP(+) = L-aspartate 4-semialdehyde + NADPH + H(+). It carries out the reaction L-homoserine + NAD(+) = L-aspartate 4-semialdehyde + NADH + H(+). The protein operates within amino-acid biosynthesis; L-methionine biosynthesis via de novo pathway; L-homoserine from L-aspartate: step 3/3. It functions in the pathway amino-acid biosynthesis; L-threonine biosynthesis; L-threonine from L-aspartate: step 3/5. Functionally, catalyzes the conversion of L-aspartate-beta-semialdehyde (L-Asa) to L-homoserine (L-Hse), the third step in the biosynthesis of threonine and methionine from aspartate. This Mycobacterium leprae (strain TN) protein is Homoserine dehydrogenase (hom).